The chain runs to 342 residues: Cell cycle control protein 50C (342 aa).

The Cytoplasmic segment spans residues 1-33 (MEMMPQYDLSRLPENTALKQQTLPTQQLNLSAS). The chain crosses the membrane as a helical span at residues 34-54 (VVLSIFFITGGFCLSIGIILL). The Extracellular portion of the chain corresponds to 55 to 306 (LSAKSTKKIE…STLTWIGGGG (252 aa)). Residues N66, N80, N89, and N205 are each glycosylated (N-linked (GlcNAc...) asparagine). A helical membrane pass occupies residues 307-327 (LFLGLTYTVTGALTLLASFAI). The Cytoplasmic segment spans residues 328 to 342 (LTIHLMLKRSKLNFL).

This sequence belongs to the CDC50/LEM3 family. As to expression, specifically expressed in testis.

Its subcellular location is the membrane. This is Cell cycle control protein 50C (Tmem30c) from Mus musculus (Mouse).